The following is a 166-amino-acid chain: Ubiquitin-conjugating enzyme E2 13 (166 aa).

Residues 4–164 (QACLLLQKQL…VSRCVRKSQE (161 aa)) enclose the UBC core domain. Cys-89 serves as the catalytic Glycyl thioester intermediate.

This sequence belongs to the ubiquitin-conjugating enzyme family.

It carries out the reaction S-ubiquitinyl-[E1 ubiquitin-activating enzyme]-L-cysteine + [E2 ubiquitin-conjugating enzyme]-L-cysteine = [E1 ubiquitin-activating enzyme]-L-cysteine + S-ubiquitinyl-[E2 ubiquitin-conjugating enzyme]-L-cysteine.. It participates in protein modification; protein ubiquitination. Its function is as follows. Accepts the ubiquitin from the E1 complex and catalyzes its covalent attachment to other proteins. Involved in the formation of multiubiquitin chains. Signal the protein for selective degradation. This Arabidopsis thaliana (Mouse-ear cress) protein is Ubiquitin-conjugating enzyme E2 13 (UBC13).